The chain runs to 454 residues: MASHLIDFLLIGNNFGTPEMRAVWSEQNRLTRQVDVEIALALAEGDLGVIPQDAASTIASHANASALNIEEIAQDAVRMKHSLMPTIAAIQRQCGEAGEYIHYGVTTQDVVDTATVLQLRQAFDIVVRDTRLVAIELKRLAKKHQHTLMTGRTHGMQALPTTFGFKLAVWLDEFVRHLQRLNEIRERVLVGNINGAIGTYASFGELGPEIERHTLTRLGLNTPNIGWQSARDRFSEYASVTVLISGTLGKIGNELYNLMRTEINEIEEPFSEGKIGSTTMPHKRNPAALEGLASLTAPLFKSAALIHESMKVEHERDAMSWRAEWIALPEINIYLSAQLQNALGILRGMSVNEKQMRANLDLQNGLLLSEKVMFEIGKLLGKQTAHHLVYECSMAAFEQNREFKALLLEHPVLSQHLTADTLDTWLDPANYVGSAPQKVDEVIRYADGTGLLAE.

A fumarate-binding site is contributed by 106–107 (TT). The active-site Proton donor/acceptor is H154. Fumarate is bound at residue R233. Catalysis depends on S277, which acts as the Proton donor/acceptor. Fumarate contacts are provided by residues T278 and 283-285 (KRN).

The protein belongs to the lyase 1 family.

The catalysed reaction is N-acetyl-S-(2-succino)-L-cysteine = N-acetyl-L-cysteine + fumarate. It functions in the pathway amino-acid biosynthesis; L-cysteine biosynthesis. Catalyzes the cleavage of N-acetyl-S-(2-succino)cysteine into fumarate and N-acetylcysteine. Is involved in a S-(2-succino)cysteine (2SC) degradation pathway that allows the bacterium to recover cysteine from 2SC and to detoxify 2SC that may be a toxic metabolite. Can also perform the reverse reaction in vitro, and has minor activity against 2SC and other small molecule thiols. This chain is N-acetyl-S-(2-succino)cysteine lyase, found in Dickeya dadantii (strain 3937) (Erwinia chrysanthemi (strain 3937)).